Consider the following 1171-residue polypeptide: ATP-dependent helicase/deoxyribonuclease subunit B (1171 aa).

Positions 1–343 (MSLRFVIGRA…LVAEENYRYR (343 aa)) constitute a UvrD-like helicase ATP-binding domain. 8 to 15 (GRAGSGKS) lines the ATP pocket. The 307-residue stretch at 281-587 (MEQPRFHSPA…QFANIPPSLD (307 aa)) folds into the UvrD-like helicase C-terminal domain. [4Fe-4S] cluster is bound by residues Cys805, Cys1129, Cys1132, and Cys1138.

Belongs to the helicase family. AddB/RexB type 1 subfamily. Heterodimer of AddA and AddB. It depends on Mg(2+) as a cofactor. Requires [4Fe-4S] cluster as cofactor.

Its function is as follows. The heterodimer acts as both an ATP-dependent DNA helicase and an ATP-dependent, dual-direction single-stranded exonuclease. Recognizes the chi site generating a DNA molecule suitable for the initiation of homologous recombination. The AddB subunit has 5' -&gt; 3' nuclease activity but not helicase activity. The polypeptide is ATP-dependent helicase/deoxyribonuclease subunit B (Bacillus anthracis).